Consider the following 1938-residue polypeptide: Myosin-4 (1938 aa).

The region spanning 33-82 (DAKSSVFVADPKESFVKATVQSREGGKVTAKTEAGATVTVKEDQVFPMNP) is the Myosin N-terminal SH3-like domain. Position 36 is a phosphoserine (serine 36). A phosphothreonine mark is found at threonine 64 and threonine 69. The 696-residue stretch at 86-781 (DKIEDMAMMT…LLGLLEEMRD (696 aa)) folds into the Myosin motor domain. ATP is bound at residue 179 to 186 (GESGAGKT). Tyrosine 389 carries the phosphotyrosine modification. Serine 392 bears the Phosphoserine mark. Threonine 419 carries the post-translational modification Phosphothreonine. The residue at position 424 (tyrosine 424) is a Phosphotyrosine. An actin-binding region spans residues 658 to 680 (LNKLMTNLRSTHPHFVRCIIPNE). The residue at position 756 (histidine 756) is a Pros-methylhistidine. Residues 760–774 (KFGHTKVFFKAGLLG) form an actin-binding region. The region spanning 784 to 813 (LAQLITRTQAMCRGFLARVEYKKMVERRES) is the IQ domain. Residues 845-1926 (SAETEKEMAN…ESQVNKLRVK (1082 aa)) adopt a coiled-coil conformation. A phosphoserine mark is found at serine 1091, serine 1095, serine 1161, and serine 1236. Threonine 1240 carries the phosphothreonine modification. Serine 1242 is modified (phosphoserine). Threonine 1254 carries the phosphothreonine modification. Residue serine 1260 is modified to Phosphoserine. Position 1264 is a phosphothreonine (threonine 1264). Serine 1277 is modified (phosphoserine). Threonine 1285 is modified (phosphothreonine). Serine 1287, serine 1291, serine 1302, and serine 1305 each carry phosphoserine. Residue tyrosine 1463 is modified to Phosphotyrosine. At threonine 1466 the chain carries Phosphothreonine. Serine 1473 is modified (phosphoserine). Tyrosine 1491 carries the post-translational modification Phosphotyrosine. Serine 1494 bears the Phosphoserine mark. Phosphothreonine is present on threonine 1500. Phosphoserine is present on serine 1513. Threonine 1516 carries the phosphothreonine modification. A phosphoserine mark is found at serine 1541, serine 1553, serine 1573, serine 1599, serine 1602, serine 1713, and serine 1725. A phosphothreonine mark is found at threonine 1729 and threonine 1735. The residue at position 1738 (serine 1738) is a Phosphoserine.

Belongs to the TRAFAC class myosin-kinesin ATPase superfamily. Myosin family. In terms of assembly, muscle myosin is a hexameric protein that consists of 2 heavy chain subunits (MHC), 2 alkali light chain subunits (MLC) and 2 regulatory light chain subunits (MLC-2).

Its subcellular location is the cytoplasm. The protein resides in the myofibril. Its function is as follows. Muscle contraction. The chain is Myosin-4 (MYH4) from Oryctolagus cuniculus (Rabbit).